A 168-amino-acid chain; its full sequence is SPbeta prophage-derived uncharacterized protein YomW (168 aa).

This is SPbeta prophage-derived uncharacterized protein YomW (yomW) from Bacillus subtilis (strain 168).